The primary structure comprises 804 residues: Probable replication endonuclease from prophage-like region 1 (804 aa).

Residues Y498 and Y502 each act as O-(5'-phospho-DNA)-tyrosine intermediate in the active site.

Belongs to the phage GPA family.

Possible endonuclease which induces a single-strand cut and initiates DNA replication. The protein is Probable replication endonuclease from prophage-like region 1 of Salmonella typhi.